The primary structure comprises 283 residues: Thymidylate synthase (283 aa).

Residue arginine 22 participates in dUMP binding. Residue cysteine 160 is the Nucleophile of the active site. DUMP-binding positions include 180 to 183 (RSCD), asparagine 191, and 221 to 223 (HIY). A (6R)-5,10-methylene-5,6,7,8-tetrahydrofolate-binding site is contributed by aspartate 183. Serine 282 serves as a coordination point for (6R)-5,10-methylene-5,6,7,8-tetrahydrofolate.

It belongs to the thymidylate synthase family. Bacterial-type ThyA subfamily. Homodimer.

The protein localises to the cytoplasm. It catalyses the reaction dUMP + (6R)-5,10-methylene-5,6,7,8-tetrahydrofolate = 7,8-dihydrofolate + dTMP. Its pathway is pyrimidine metabolism; dTTP biosynthesis. Its function is as follows. Catalyzes the reductive methylation of 2'-deoxyuridine-5'-monophosphate (dUMP) to 2'-deoxythymidine-5'-monophosphate (dTMP) while utilizing 5,10-methylenetetrahydrofolate (mTHF) as the methyl donor and reductant in the reaction, yielding dihydrofolate (DHF) as a by-product. This enzymatic reaction provides an intracellular de novo source of dTMP, an essential precursor for DNA biosynthesis. This is Thymidylate synthase from Psychromonas ingrahamii (strain DSM 17664 / CCUG 51855 / 37).